The sequence spans 434 residues: Bestrophin homolog 12 (434 aa).

The next 4 membrane-spanning stretches (helical) occupy residues 31 to 51 (KVIL…FLVF), 76 to 96 (VCIP…DQWE), 244 to 264 (IPIP…YFFF), and 278 to 298 (WALS…FLVG).

This sequence belongs to the anion channel-forming bestrophin (TC 1.A.46) family. Calcium-sensitive chloride channel subfamily. As to quaternary structure, forms oligomers.

It is found in the cell membrane. Its function is as follows. Forms chloride channels. The protein is Bestrophin homolog 12 (best-12) of Caenorhabditis elegans.